Here is a 130-residue protein sequence, read N- to C-terminus: Small ribosomal subunit protein eS8 (130 aa).

It belongs to the eukaryotic ribosomal protein eS8 family. In terms of assembly, part of the 30S ribosomal subunit.

The protein is Small ribosomal subunit protein eS8 of Thermococcus gammatolerans (strain DSM 15229 / JCM 11827 / EJ3).